A 103-amino-acid polypeptide reads, in one-letter code: Putative membrane protein insertion efficiency factor (103 aa).

The protein belongs to the UPF0161 family.

Its subcellular location is the cell membrane. Could be involved in insertion of integral membrane proteins into the membrane. The protein is Putative membrane protein insertion efficiency factor of Clavibacter sepedonicus (Clavibacter michiganensis subsp. sepedonicus).